The primary structure comprises 453 residues: Allantoinase (453 aa).

Residues His59, His61, Lys146, His186, His242, and Asp315 each contribute to the Zn(2+) site. Position 146 is an N6-carboxylysine (Lys146).

The protein belongs to the metallo-dependent hydrolases superfamily. Allantoinase family. As to quaternary structure, homotetramer. Zn(2+) is required as a cofactor. Carboxylation allows a single lysine to coordinate two zinc ions.

The enzyme catalyses (S)-allantoin + H2O = allantoate + H(+). Its pathway is nitrogen metabolism; (S)-allantoin degradation; allantoate from (S)-allantoin: step 1/1. Catalyzes the conversion of allantoin (5-ureidohydantoin) to allantoic acid by hydrolytic cleavage of the five-member hydantoin ring. This Salmonella choleraesuis (strain SC-B67) protein is Allantoinase.